We begin with the raw amino-acid sequence, 311 residues long: Probable dihydroorotate dehydrogenase A (fumarate) (311 aa).

Substrate-binding positions include lysine 45, 69 to 73, and asparagine 128; that span reads NSMGL. 45–46 is an FMN binding site; that stretch reads KT. Asparagine 128 serves as a coordination point for FMN. Residue cysteine 131 is the Nucleophile of the active site. FMN is bound by residues lysine 165 and valine 193. 194–195 contributes to the substrate binding site; the sequence is NS. Residues glycine 220, 248–249, and 270–271 contribute to the FMN site; these read GG and GT.

It belongs to the dihydroorotate dehydrogenase family. Type 1 subfamily. Homodimer. FMN is required as a cofactor.

It localises to the cytoplasm. The enzyme catalyses (S)-dihydroorotate + fumarate = orotate + succinate. It participates in pyrimidine metabolism; UMP biosynthesis via de novo pathway. Catalyzes the conversion of dihydroorotate to orotate with fumarate as the electron acceptor. This chain is Probable dihydroorotate dehydrogenase A (fumarate) (pyrDA), found in Streptococcus pneumoniae (strain ATCC BAA-255 / R6).